Here is a 279-residue protein sequence, read N- to C-terminus: MMPTDGSYFHLHLVSDSTGETLITVSRAVAAQYANVSPVEHVYPLVRSQKQLDRVLTEIEEAPGIVLFTLLEKDLVGRLEAKCEEINIPSLSIIGPVMQLFQAYLGSSTTGRVGAQHTLNAEYFKRIDALNYSMIHDDGQHVEGLEDADVVLVGVSRTSKTPTSIYLANRGIRTANVPLVPGIAIPHQLETLTKPLVVSLHATPERLIQVRQNRLLSMGATVGNEDYIDRQSVNDEVSFARRLSAKYGWALLEVTRRSIEETAAAVMKLLADRQRQRQE.

G154–T161 contributes to the ADP binding site.

Belongs to the pyruvate, phosphate/water dikinase regulatory protein family. PDRP subfamily.

The enzyme catalyses N(tele)-phospho-L-histidyl/L-threonyl-[pyruvate, phosphate dikinase] + ADP = N(tele)-phospho-L-histidyl/O-phospho-L-threonyl-[pyruvate, phosphate dikinase] + AMP + H(+). It catalyses the reaction N(tele)-phospho-L-histidyl/O-phospho-L-threonyl-[pyruvate, phosphate dikinase] + phosphate + H(+) = N(tele)-phospho-L-histidyl/L-threonyl-[pyruvate, phosphate dikinase] + diphosphate. Its function is as follows. Bifunctional serine/threonine kinase and phosphorylase involved in the regulation of the pyruvate, phosphate dikinase (PPDK) by catalyzing its phosphorylation/dephosphorylation. The polypeptide is Putative pyruvate, phosphate dikinase regulatory protein (Rhodopseudomonas palustris (strain BisB18)).